The sequence spans 237 residues: Phosphoribosylaminoimidazole-succinocarboxamide synthase (237 aa).

This sequence belongs to the SAICAR synthetase family.

It carries out the reaction 5-amino-1-(5-phospho-D-ribosyl)imidazole-4-carboxylate + L-aspartate + ATP = (2S)-2-[5-amino-1-(5-phospho-beta-D-ribosyl)imidazole-4-carboxamido]succinate + ADP + phosphate + 2 H(+). It participates in purine metabolism; IMP biosynthesis via de novo pathway; 5-amino-1-(5-phospho-D-ribosyl)imidazole-4-carboxamide from 5-amino-1-(5-phospho-D-ribosyl)imidazole-4-carboxylate: step 1/2. The protein is Phosphoribosylaminoimidazole-succinocarboxamide synthase of Escherichia coli O127:H6 (strain E2348/69 / EPEC).